Consider the following 138-residue polypeptide: Large-conductance mechanosensitive channel (138 aa).

The next 3 helical transmembrane spans lie at valine 15–valine 35, isoleucine 38–glutamine 58, and glycine 80–valine 100.

Belongs to the MscL family. As to quaternary structure, homopentamer.

Its subcellular location is the cell inner membrane. Functionally, channel that opens in response to stretch forces in the membrane lipid bilayer. May participate in the regulation of osmotic pressure changes within the cell. This Brucella canis (strain ATCC 23365 / NCTC 10854 / RM-666) protein is Large-conductance mechanosensitive channel.